We begin with the raw amino-acid sequence, 59 residues long: Large ribosomal subunit protein bL32 (59 aa).

The tract at residues 1 to 23 is disordered; the sequence is MAVQQNKKSPSKRGMHRSHDFLT.

This sequence belongs to the bacterial ribosomal protein bL32 family.

This Burkholderia multivorans (strain ATCC 17616 / 249) protein is Large ribosomal subunit protein bL32.